Consider the following 472-residue polypeptide: Keratin, type I cytoskeletal 14 (472 aa).

Positions 1–114 are head; sequence MTTCSRQFTS…AGGDGLLVGS (114 aa). The interval 115–150 is coil 1A; the sequence is EKVTMQNLNDRLASYLDKVRALEEANADLEVKIRDW. The IF rod domain occupies 115–426; the sequence is EKVTMQNLND…RLLEGEDAHL (312 aa). Positions 151–168 are linker 1; the sequence is YQRQRPAEIKDYSPYFKT. Residues 169-260 are coil 1B; the sequence is IEDLRNKILT…KNHEEEMNAL (92 aa). Residues 261–283 are linker 12; that stretch reads RGQVGGDVNVEMDAAPGVDLSRI. The interval 284 to 422 is coil 2; it reads LNEMRDQYEK…ATYRRLLEGE (139 aa). A tail region spans residues 423–472; sequence DAHLSSSQFSSGSQSSRDVTSSSRQIRTKVMDVHDGKVVSTHEQVLRTKN. Residues 425–472 are interaction with Type I keratins and keratin filaments; the sequence is HLSSSQFSSGSQSSRDVTSSSRQIRTKVMDVHDGKVVSTHEQVLRTKN. Residues 426-472 are disordered; the sequence is LSSSQFSSGSQSSRDVTSSSRQIRTKVMDVHDGKVVSTHEQVLRTKN. The segment covering 427–445 has biased composition (low complexity); that stretch reads SSSQFSSGSQSSRDVTSSS. Ser435 is subject to Phosphoserine.

It belongs to the intermediate filament family. As to quaternary structure, heterotetramer of two type I and two type II keratins. Forms a disulfide-linked heterodimer (via 2B domains) with KRT5 (via 2B domains). Forms a heterodimer with KRT1; the interaction is more abundant in the absence of KRT5. Interacts with PLEC isoform 1C, when in a heterodimer with KRT5. Interacts with TRADD and with keratin filaments. Associates with other type I keratins. Interacts with EPPK1. Interacts with KLHL24. Interacts with PKP1 (via N-terminus) and PKP2. Post-translationally, a disulfide bond is formed between rather than within filaments and promotes the formation of a keratin filament cage around the nucleus. In terms of processing, ubiquitinated by the BCR(KLHL24) E3 ubiquitin ligase complex. As to expression, expressed in the corneal epithelium (at protein level). Detected in the basal layer, lowered within the more apically located layers specifically in the stratum spinosum, stratum granulosum but is not detected in stratum corneum. Strongly expressed in the outer root sheath of anagen follicles but not in the germinative matrix, inner root sheath or hair. Found in keratinocytes surrounding the club hair during telogen.

It is found in the cytoplasm. It localises to the nucleus. In terms of biological role, the nonhelical tail domain is involved in promoting KRT5-KRT14 filaments to self-organize into large bundles and enhances the mechanical properties involved in resilience of keratin intermediate filaments in vitro. The protein is Keratin, type I cytoskeletal 14 (KRT14) of Homo sapiens (Human).